The sequence spans 439 residues: Protein translocase subunit SecY (439 aa).

A run of 10 helical transmembrane segments spans residues 23–43, 77–97, 125–145, 154–174, 187–207, 217–237, 274–294, 317–337, 369–389, and 397–417; these read IASVVIALIIFRIGSFIPIPG, IFALGIMPYISSSIIIQLLTL, LVLALFQSIGIVTSLPKISGM, FYFYFTAIIILVTGTMFLMWL, ISIIIFIGIIAGLPSAIVHTI, ILLFLCVLILIFSVVFLVVFI, VIPAIFASSVVLFPVTIISWF, YLILYVFSIIFFCFFYTGLVF, IMIRLTLFGSLYIAFICLIPE, and VPFYFGGTSLLIVVVVIMDFI.

It belongs to the SecY/SEC61-alpha family. In terms of assembly, component of the Sec protein translocase complex. Heterotrimer consisting of SecY, SecE and SecG subunits. The heterotrimers can form oligomers, although 1 heterotrimer is thought to be able to translocate proteins. Interacts with the ribosome. Interacts with SecDF, and other proteins may be involved. Interacts with SecA.

Its subcellular location is the cell membrane. The central subunit of the protein translocation channel SecYEG. Consists of two halves formed by TMs 1-5 and 6-10. These two domains form a lateral gate at the front which open onto the bilayer between TMs 2 and 7, and are clamped together by SecE at the back. The channel is closed by both a pore ring composed of hydrophobic SecY resides and a short helix (helix 2A) on the extracellular side of the membrane which forms a plug. The plug probably moves laterally to allow the channel to open. The ring and the pore may move independently. This Buchnera aphidicola subsp. Schizaphis graminum (strain Sg) protein is Protein translocase subunit SecY.